We begin with the raw amino-acid sequence, 376 residues long: Putative phosphoserine aminotransferase (376 aa).

An L-glutamate-binding site is contributed by Arg-50. Residues 84-85 (AT), Phe-108, Thr-154, Asp-176, and Gln-199 each bind pyridoxal 5'-phosphate. Position 200 is an N6-(pyridoxal phosphate)lysine (Lys-200). 251–252 (NT) provides a ligand contact to pyridoxal 5'-phosphate.

It belongs to the class-V pyridoxal-phosphate-dependent aminotransferase family. SerC subfamily. As to quaternary structure, homodimer. Pyridoxal 5'-phosphate is required as a cofactor.

It localises to the cytoplasm. The enzyme catalyses O-phospho-L-serine + 2-oxoglutarate = 3-phosphooxypyruvate + L-glutamate. It carries out the reaction 4-(phosphooxy)-L-threonine + 2-oxoglutarate = (R)-3-hydroxy-2-oxo-4-phosphooxybutanoate + L-glutamate. It functions in the pathway amino-acid biosynthesis; L-serine biosynthesis; L-serine from 3-phospho-D-glycerate: step 2/3. The protein operates within cofactor biosynthesis; pyridoxine 5'-phosphate biosynthesis; pyridoxine 5'-phosphate from D-erythrose 4-phosphate: step 3/5. In terms of biological role, catalyzes the reversible conversion of 3-phosphohydroxypyruvate to phosphoserine and of 3-hydroxy-2-oxo-4-phosphonooxybutanoate to phosphohydroxythreonine. The sequence is that of Putative phosphoserine aminotransferase from Mycobacterium bovis (strain ATCC BAA-935 / AF2122/97).